Consider the following 1237-residue polypeptide: Anion exchange protein 2 (1237 aa).

The disordered stretch occupies residues 1–237; the sequence is MSSAPRRPAS…SYNLQERRRI (237 aa). The Cytoplasmic portion of the chain corresponds to 1–703; the sequence is MSSAPRRPAS…SDFRDALDPQ (703 aa). Composition is skewed to basic and acidic residues over residues 37–49 and 58–75; these read ELHRTLGVERFEE and GGEEPGRSYGEEDFEYHR. Composition is skewed to basic residues over residues 76–85 and 94–110; these read QSSHHIHHPL and RRRKTPQGPGRKPRRRP. The residue at position 113 (S113) is a Phosphoserine. Over residues 122-133 the composition is skewed to acidic residues; the sequence is EEGEEDEEEANE. Residues 137–151 are compositionally biased toward low complexity; that stretch reads ARAPTEPSPASTPSS. A phosphoserine mark is found at S144, S170, and S172. A compositionally biased stretch (gly residues) spans 206 to 215; it reads TAGGDNGGAS. Residue S239 is modified to Phosphoserine. The residue at position 253 (T253) is a Phosphothreonine. K270 is modified (N6-methyllysine). Residues 281–316 form a disordered region; the sequence is RRHLVRKNAKGSAQSSREGREPGPTPRSRPRAPHKP. S439 carries the post-translational modification Phosphoserine. The disordered stretch occupies residues 445-464; sequence SLLGHHHGQGAESDPHVTEP. 4 helical membrane passes run 704-727, 733-770, 790-812, and 822-843; these read CVAAVIFIYFAALSPAITFGGLLG, LIGVSELIMSTALQGVIFCLLGAQPLLVIGFSGPLLVF, VWIGFWLVLLALLMVALEGSFLV, and IFAFLISLIFIYETFYKLIKIF. The interval 704-1237 is membrane (anion exchange); the sequence is CVAAVIFIYF…DEYNEMPMPV (534 aa). Residues 844 to 896 are Extracellular-facing; that stretch reads QEHPLHGCSVSNSSETDSSENATWAGAGSTLGPANRSSAGQAGQGRPRGQPNT. Residues N855, N864, and N878 are each glycosylated (N-linked (GlcNAc...) asparagine). Residues 897–914 traverse the membrane as a helical segment; that stretch reads ALLSLVLMAGTFFIAFFL. The Cytoplasmic segment spans residues 915–929; that stretch reads RKFKNSRFFPGRIRR. The next 5 helical transmembrane spans lie at 930–950, 984–1006, 1032–1053, 1087–1132, and 1159–1195; these read VIGDFGVPIAILIMVLVDYSI, PFPVWMMVASLLPAILVFILIFM, LLLIVAMGGICALFGLPWLAAA, VTGL…IQFY, and MHLFTALQLLCLALLWAVMSTAASLAFPFILILTVPL. C1169 is lipidated: S-palmitoyl cysteine.

This sequence belongs to the anion exchanger (TC 2.A.31) family. As to expression, expressed in the ileum (at protein level).

Its subcellular location is the cell membrane. The protein localises to the apical cell membrane. It localises to the basolateral cell membrane. The enzyme catalyses hydrogencarbonate(in) + chloride(out) = hydrogencarbonate(out) + chloride(in). In terms of biological role, sodium-independent anion exchanger which mediates the electroneutral exchange of chloride for bicarbonate ions across the cell membrane. Plays an important role in osteoclast differentiation and function. Regulates bone resorption and calpain-dependent actin cytoskeleton organization in osteoclasts via anion exchange-dependent control of pH. Essential for intracellular pH regulation in CD8(+) T-cells upon CD3 stimulation, modulating CD8(+) T-cell response. In Oryctolagus cuniculus (Rabbit), this protein is Anion exchange protein 2 (SLC4A2).